A 309-amino-acid polypeptide reads, in one-letter code: Probable manganese-dependent inorganic pyrophosphatase (309 aa).

Positions 9, 13, 15, 75, 97, and 149 each coordinate Mn(2+).

It belongs to the PPase class C family. Mn(2+) is required as a cofactor.

It is found in the cytoplasm. The enzyme catalyses diphosphate + H2O = 2 phosphate + H(+). This is Probable manganese-dependent inorganic pyrophosphatase from Bacillus cereus (strain G9842).